Reading from the N-terminus, the 68-residue chain is Protein SlyX homolog (68 aa).

This sequence belongs to the SlyX family.

The protein is Protein SlyX homolog of Pseudomonas putida (strain GB-1).